Reading from the N-terminus, the 312-residue chain is Malate dehydrogenase (312 aa).

NAD(+)-binding positions include 7-13 and D34; that span reads GAAGGIG. 2 residues coordinate substrate: R81 and R87. NAD(+) contacts are provided by residues N94 and 117–119; that span reads ITN. Residues N119 and R153 each contribute to the substrate site. Residue H177 is the Proton acceptor of the active site. Position 227 (M227) interacts with NAD(+).

Belongs to the LDH/MDH superfamily. MDH type 1 family. Homodimer.

It carries out the reaction (S)-malate + NAD(+) = oxaloacetate + NADH + H(+). Its function is as follows. Catalyzes the reversible oxidation of malate to oxaloacetate. This is Malate dehydrogenase from Escherichia coli O139:H28 (strain E24377A / ETEC).